We begin with the raw amino-acid sequence, 390 residues long: Glutamate 5-kinase (390 aa).

Lys29 serves as a coordination point for ATP. Positions 69, 156, and 168 each coordinate substrate. 188–189 (TD) is a binding site for ATP. Residues 295-374 (SGSLIVDAGA…EQFDRILGNN (80 aa)) form the PUA domain.

Belongs to the glutamate 5-kinase family.

Its subcellular location is the cytoplasm. The catalysed reaction is L-glutamate + ATP = L-glutamyl 5-phosphate + ADP. It functions in the pathway amino-acid biosynthesis; L-proline biosynthesis; L-glutamate 5-semialdehyde from L-glutamate: step 1/2. In terms of biological role, catalyzes the transfer of a phosphate group to glutamate to form L-glutamate 5-phosphate. The sequence is that of Glutamate 5-kinase from Psychrobacter arcticus (strain DSM 17307 / VKM B-2377 / 273-4).